A 425-amino-acid chain; its full sequence is Serine--tRNA ligase (425 aa).

The disordered stretch occupies residues 41–70 (TERSQLQARSNQVGKQVGEKIKSGSDPKGT). Residues 44–54 (SQLQARSNQVG) show a composition bias toward polar residues. Over residues 57–70 (VGEKIKSGSDPKGT) the composition is skewed to basic and acidic residues. Residue 234–236 (TSE) participates in L-serine binding. Position 265 to 267 (265 to 267 (RRE)) interacts with ATP. Glutamate 288 is an L-serine binding site. 352–355 (EISS) is a binding site for ATP. An L-serine-binding site is contributed by serine 388.

It belongs to the class-II aminoacyl-tRNA synthetase family. Type-1 seryl-tRNA synthetase subfamily. Homodimer. The tRNA molecule binds across the dimer.

The protein resides in the cytoplasm. It catalyses the reaction tRNA(Ser) + L-serine + ATP = L-seryl-tRNA(Ser) + AMP + diphosphate + H(+). The enzyme catalyses tRNA(Sec) + L-serine + ATP = L-seryl-tRNA(Sec) + AMP + diphosphate + H(+). The protein operates within aminoacyl-tRNA biosynthesis; selenocysteinyl-tRNA(Sec) biosynthesis; L-seryl-tRNA(Sec) from L-serine and tRNA(Sec): step 1/1. Catalyzes the attachment of serine to tRNA(Ser). Is also able to aminoacylate tRNA(Sec) with serine, to form the misacylated tRNA L-seryl-tRNA(Sec), which will be further converted into selenocysteinyl-tRNA(Sec). The sequence is that of Serine--tRNA ligase from Trichodesmium erythraeum (strain IMS101).